Consider the following 148-residue polypeptide: MQIVATNKKIRDYEILETYEAGIELKGTEVKSLRERNVSFKDAFCRVRDNEIYMLNLHISPYKFANRFNHDPERPRKLLLHKREIKRLIGKLTTTGLTLIPTKIYFNDHGLAKVEIALVRGKKRYDKREEIKRKEINRKIKTYLKYGE.

This sequence belongs to the SmpB family.

It is found in the cytoplasm. Its function is as follows. Required for rescue of stalled ribosomes mediated by trans-translation. Binds to transfer-messenger RNA (tmRNA), required for stable association of tmRNA with ribosomes. tmRNA and SmpB together mimic tRNA shape, replacing the anticodon stem-loop with SmpB. tmRNA is encoded by the ssrA gene; the 2 termini fold to resemble tRNA(Ala) and it encodes a 'tag peptide', a short internal open reading frame. During trans-translation Ala-aminoacylated tmRNA acts like a tRNA, entering the A-site of stalled ribosomes, displacing the stalled mRNA. The ribosome then switches to translate the ORF on the tmRNA; the nascent peptide is terminated with the 'tag peptide' encoded by the tmRNA and targeted for degradation. The ribosome is freed to recommence translation, which seems to be the essential function of trans-translation. The sequence is that of SsrA-binding protein from Pseudothermotoga lettingae (strain ATCC BAA-301 / DSM 14385 / NBRC 107922 / TMO) (Thermotoga lettingae).